The chain runs to 234 residues: uncharacterized protein (234 aa).

Position 10 to 34 (10 to 34 (VVTGASSGIGASIAETLANQGVKVV)) interacts with NADP(+). S143 serves as a coordination point for substrate. The active-site Proton acceptor is Y156.

Belongs to the short-chain dehydrogenases/reductases (SDR) family.

This is an uncharacterized protein from Staphylococcus saprophyticus subsp. saprophyticus (strain ATCC 15305 / DSM 20229 / NCIMB 8711 / NCTC 7292 / S-41).